Consider the following 155-residue polypeptide: Ribonuclease H (155 aa).

Residues 1 to 143 (MNQVEIYTDG…ADALANRGVD (143 aa)) form the RNase H type-1 domain. The Mg(2+) site is built by Asp-9, Glu-47, Asp-69, and Asp-135.

It belongs to the RNase H family. As to quaternary structure, monomer. Mg(2+) serves as cofactor.

The protein localises to the cytoplasm. It catalyses the reaction Endonucleolytic cleavage to 5'-phosphomonoester.. Functionally, endonuclease that specifically degrades the RNA of RNA-DNA hybrids. This is Ribonuclease H from Verminephrobacter eiseniae (strain EF01-2).